A 161-amino-acid chain; its full sequence is UPF0178 protein BruAb1_1955 (161 aa).

This sequence belongs to the UPF0178 family.

The protein is UPF0178 protein BruAb1_1955 of Brucella abortus biovar 1 (strain 9-941).